A 1104-amino-acid polypeptide reads, in one-letter code: Mitogen-activated protein kinase kinase kinase 9 (1104 aa).

The segment covering 12–22 (ASAAAAAPPGE) has biased composition (low complexity). A disordered region spans residues 12 to 47 (ASAAAAAPPGEDGAGAGAEEEEEEEEEAAAAVGPGE). Acidic residues predominate over residues 29 to 39 (AEEEEEEEEEA). The SH3 domain occupies 52-116 (APLPYWTAVF…PSNYVTPRSA (65 aa)). The Protein kinase domain occupies 144 to 412 (LTLEEIIGIG…LTTIEESGFF (269 aa)). ATP contacts are provided by residues 150–158 (IGIGGFGKV) and lysine 171. The active-site Proton acceptor is the aspartate 268. Phosphothreonine; by autocatalysis is present on residues threonine 304 and threonine 305. Position 308 is a phosphoserine; by autocatalysis (serine 308). Threonine 312 carries the phosphothreonine; by autocatalysis modification. 2 leucine-zipper regions span residues 430-451 (IQEMFDQLRAKEKELRTWEEEL) and 465-486 (LRRREQELAEREIDILERELNI). Disordered regions lie at residues 532–636 (ASPT…PHFH), 675–742 (MEDE…LKRG), 781–819 (EEPEPPAREEKKRREGLFQRSSRPRRSTSPPSRKLFKKE), and 890–1038 (RDPN…CFAS). Phosphoserine is present on serine 533. 2 stretches are compositionally biased toward polar residues: residues 566–575 (PGESSKTWGR) and 723–739 (PVNSATSTPQLTPTNSL). Residues 785–797 (PPAREEKKRREGL) show a composition bias toward basic and acidic residues. Polar residues predominate over residues 893–910 (NQSLTPTHVTLTTPSQPS). The span at 929-944 (SRSPSSNGLSPSPGAG) shows a compositional bias: low complexity. Positions 1014 to 1038 (HARSTSPANSSSTETPSNLDSCFAS) are enriched in polar residues.

It belongs to the protein kinase superfamily. STE Ser/Thr protein kinase family. MAP kinase kinase kinase subfamily. Homodimer. The cofactor is Mg(2+). Post-translationally, autophosphorylation on serine and threonine residues within the activation loop plays a role in enzyme activation. Thr-312 is likely to be the main autophosphorylation site. Autophosphorylation also occurs on Thr-304 and Ser-308. As to expression, expressed in epithelial tumor cell lines of colonic, breast and esophageal origin.

It carries out the reaction L-seryl-[protein] + ATP = O-phospho-L-seryl-[protein] + ADP + H(+). The catalysed reaction is L-threonyl-[protein] + ATP = O-phospho-L-threonyl-[protein] + ADP + H(+). Homodimerization via the leucine zipper domains is required for autophosphorylation of multiple sites in the activation loop and subsequent activation. Autophosphorylation at Thr-312 is the key step in activation of MAP3K9/MLK1 and is required for full phosphorylation. Autophosphorylation at Thr-304 and Ser-308 have been shown to be of secondary importance in the activation of MAP3K9/MLK1. CEP-1347 and many indolocarbazole analogs have been shown to act as inhibitors of MAP3K9/MLK1 activity. Its function is as follows. Serine/threonine kinase which acts as an essential component of the MAP kinase signal transduction pathway. Plays an important role in the cascades of cellular responses evoked by changes in the environment. Once activated, acts as an upstream activator of the MKK/JNK signal transduction cascade through the phosphorylation of MAP2K4/MKK4 and MAP2K7/MKK7 which in turn activate the JNKs. The MKK/JNK signaling pathway regulates stress response via activator protein-1 (JUN) and GATA4 transcription factors. Also plays a role in mitochondrial death signaling pathway, including the release cytochrome c, leading to apoptosis. The chain is Mitogen-activated protein kinase kinase kinase 9 (MAP3K9) from Homo sapiens (Human).